The sequence spans 383 residues: GTPase-interacting component 2 (383 aa).

The tract at residues 63–106 is disordered; sequence SNKKNIELPPLSPNSHPSCHHRRSNSNSAKSKESSSSSSSANKT. A compositionally biased stretch (low complexity) spans 87-105; the sequence is NSNSAKSKESSSSSSSANK. One can recognise a CRIB domain in the interval 134–147; it reads ISTPFDFQHISHAD. The segment covering 155–165 has biased composition (polar residues); the sequence is EQLQEPSSLST. The interval 155-189 is disordered; that stretch reads EQLQEPSSLSTEIKDDYTSSSSKRDSKSLNKAFVT. Over residues 166–182 the composition is skewed to basic and acidic residues; the sequence is EIKDDYTSSSSKRDSKS. A phosphoserine mark is found at Ser254, Ser258, Ser337, Ser345, and Ser367. The interval 319–361 is disordered; the sequence is ETPNSNKDSAKAFFPSRQSPLPKRRNSIATPSPQSKFSYSDSP. Residues 345-361 show a composition bias toward polar residues; that stretch reads SIATPSPQSKFSYSDSP.

This sequence belongs to the BORG/CEP family. As to quaternary structure, interacts with GTP-bound CDC42.

The protein localises to the bud neck. Its subcellular location is the bud tip. The protein resides in the cytoplasm. It is found in the cell cortex. It localises to the cytoskeleton. In terms of biological role, required for cell size and shape control, bud site selection, bud emergence, actin cytoskeletal organization, mitotic spindle orientation/positioning, and mating projection formation in response to mating pheromone. The chain is GTPase-interacting component 2 (GIC2) from Saccharomyces cerevisiae (strain ATCC 204508 / S288c) (Baker's yeast).